An 84-amino-acid polypeptide reads, in one-letter code: MNLFDFFRGRQKQTSASVAKERLQIIVAHERGQRSTPDYLPALQKELVEVIRKYVNIGNDDVQVALENQGSCSILELNITLPER.

Belongs to the MinE family.

In terms of biological role, prevents the cell division inhibition by proteins MinC and MinD at internal division sites while permitting inhibition at polar sites. This ensures cell division at the proper site by restricting the formation of a division septum at the midpoint of the long axis of the cell. This is Cell division topological specificity factor from Pseudomonas entomophila (strain L48).